The primary structure comprises 757 residues: RNA-directed RNA polymerase catalytic subunit (757 aa).

The interval 52–82 (RGKWTTNTETGAPQLNPIDGPLPEDNEPSGY) is disordered. Polar residues predominate over residues 55-64 (WTTNTETGAP). 2 short sequence motifs (nuclear localization signal) span residues 187 to 195 (RKRRVRDNM) and 203 to 216 (RTIG…NKRS). Residues 249–256 (RGFVYFVE) form a promoter-binding site region. Residues 286-483 (VRKMMTNSQD…GINMSKKKSY (198 aa)) enclose the RdRp catalytic domain.

Belongs to the influenza viruses polymerase PB1 family. In terms of assembly, influenza RNA polymerase is composed of three subunits: PB1, PB2 and PA. Interacts (via N-terminus) with PA (via C-terminus). Interacts (via C-terminus) with PB2 (via N-terminus); this interaction is essential for transcription initiation. Phosphorylated by host PRKCA.

Its subcellular location is the host nucleus. It is found in the host cytoplasm. The catalysed reaction is RNA(n) + a ribonucleoside 5'-triphosphate = RNA(n+1) + diphosphate. RNA-dependent RNA polymerase which is responsible for replication and transcription of virus RNA segments. The transcription of viral mRNAs occurs by a unique mechanism called cap-snatching. 5' methylated caps of cellular mRNAs are cleaved after 10-13 nucleotides by PA. In turn, these short capped RNAs are used as primers by PB1 for transcription of viral mRNAs. During virus replication, PB1 initiates RNA synthesis and copy vRNA into complementary RNA (cRNA) which in turn serves as a template for the production of more vRNAs. In Aves (Human), this protein is RNA-directed RNA polymerase catalytic subunit.